A 373-amino-acid polypeptide reads, in one-letter code: LIM domain-binding protein 2 (373 aa).

Disordered regions lie at residues 244-291 and 327-373; these read APPA…ANLS and QYDA…QASQ. A compositionally biased stretch (low complexity) spans 263-280; sequence STSSTSNSSAGNNANSTG. One can recognise an LIM interaction domain (LID) domain in the interval 298-337; it reads DVMVVGEPTLMGGEFGDEDERLITRLENTQYDAANGMDDE. Over residues 341 to 361 the composition is skewed to polar residues; that stretch reads NNSPALGNNSPWNSKPPATQE.

The protein belongs to the LDB family. In terms of assembly, interacts with LHX9. Interacts with SLK; leading to negatively regulate SLK kinase activity. Interacts with LMO4. Ubiquitinated by RLIM/RNF12, leading to its degradation by the proteasome.

The protein localises to the nucleus. Functionally, transcription cofactor. Binds to the LIM domain of a wide variety of LIM domain-containing transcription factors. The polypeptide is LIM domain-binding protein 2 (LDB2) (Homo sapiens (Human)).